Consider the following 975-residue polypeptide: Homeobox protein cut-like 1 (975 aa).

The CUT 1 DNA-binding region spans serine 1 to arginine 73. 2 disordered regions span residues proline 90–glutamate 113 and leucine 126–aspartate 148. Residues glutamate 113–aspartate 169 are a coiled coil. Serine 207 carries the post-translational modification Phosphoserine. Residues lysine 209 to serine 246 form a disordered region. Residues lysine 229, lysine 255, and lysine 286 each participate in a glycyl lysine isopeptide (Lys-Gly) (interchain with G-Cter in SUMO2) cross-link. A compositionally biased stretch (basic and acidic residues) spans glycine 262–glycine 297. The interval glycine 262–proline 369 is disordered. Polar residues predominate over residues arginine 328–leucine 351. Serine 349 is subject to Phosphoserine. Residues glutamine 374 to glutamine 461 constitute a DNA-binding region (CUT 2). A compositionally biased stretch (polar residues) spans leucine 476–threonine 489. The disordered stretch occupies residues leucine 476 to serine 549. Over residues serine 490 to serine 506 the composition is skewed to low complexity. Residues serine 499 and serine 509 each carry the phosphoserine modification. Residues glutamine 557 to methionine 644 constitute a DNA-binding region (CUT 3). The tract at residues arginine 652–proline 687 is disordered. Residues leucine 684–leucine 743 constitute a DNA-binding region (homeobox). At serine 710 the chain carries Phosphoserine. Lysine 724 is covalently cross-linked (Glycyl lysine isopeptide (Lys-Gly) (interchain with G-Cter in SUMO2)). The tract at residues serine 752 to lysine 949 is disordered. Low complexity predominate over residues alanine 756–serine 773. The residue at position 777 (serine 777) is a Phosphoserine. Positions glycine 780–alanine 813 are enriched in low complexity. A compositionally biased stretch (gly residues) spans proline 838–alanine 847. Residues alanine 850–glycine 860 show a composition bias toward low complexity. The segment covering proline 861 to leucine 890 has biased composition (basic residues). Over residues arginine 907–leucine 929 the composition is skewed to low complexity. Serine 925 carries the post-translational modification Phosphoserine. Over residues glycine 937–leucine 946 the composition is skewed to basic and acidic residues. A phosphoserine mark is found at serine 956 and serine 966.

This sequence belongs to the CUT homeobox family. Interacts with BANP. Post-translationally, as cells progress into S phase, a fraction of CUX1 molecules is proteolytically processed into N-terminally truncated proteins of 110 kDa by CTSL. Cell cycle-dependent processing of CUX1 serves to generate a CDP/Cux p110 with distinct DNA binding and transcriptional properties. In terms of processing, phosphorylated by PKA. A broad pattern of expression observed in tissues of diverse origins, such as cartilage, liver, brain, lung, heart and skeletal muscle. There are 2 distinct protein species: the larger one (230-250 kDa) is found mainly in adult brain, lung and heart, and the smaller one (180-190 kDa) predominates in early embryonic tissues.

It localises to the nucleus. In terms of biological role, transcription factor involved in the control of neuronal differentiation in the brain. Regulates dendrite development and branching, and dendritic spine formation in cortical layers II-III. Also involved in the control of synaptogenesis. In addition, it has probably a broad role in mammalian development as a repressor of developmentally regulated gene expression. May act by preventing binding of positively-activing CCAAT factors to promoters. Component of nf-munr repressor; binds to the matrix attachment regions (MARs) (5' and 3') of the immunoglobulin heavy chain enhancer. Represses T-cell receptor (TCR) beta enhancer function by binding to MARbeta, an ATC-rich DNA sequence located upstream of the TCR beta enhancer. Binds to the TH enhancer; may require the basic helix-loop-helix protein TCF4 as a coactivator. Plays a role in cell cycle progression, in particular at the G1/S transition. As cells progress into S phase, a fraction of CUX1 molecules is proteolytically processed into N-terminally truncated proteins of 110 kDa. While CUX1 only transiently binds to DNA and carries the CCAAT-displacement activity, CDP/Cux p110 makes a stable interaction with DNA and stimulates expression of genes such as POLA1. The chain is Homeobox protein cut-like 1 (CUX1) from Canis lupus familiaris (Dog).